The primary structure comprises 393 residues: uncharacterized protein (393 aa).

[4Fe-4S] cluster contacts are provided by Cys-72, Cys-82, Cys-85, and Cys-160. S-adenosyl-L-methionine-binding residues include Gln-215, Phe-245, Glu-267, and Asp-313. Cys-340 (nucleophile) is an active-site residue.

This sequence belongs to the class I-like SAM-binding methyltransferase superfamily. RNA M5U methyltransferase family.

This is an uncharacterized protein from Nitrosomonas europaea (strain ATCC 19718 / CIP 103999 / KCTC 2705 / NBRC 14298).